The primary structure comprises 383 residues: Acetylornithine deacetylase (383 aa).

A Zn(2+)-binding site is contributed by His80. Residue Asp82 is part of the active site. Asp112 serves as a coordination point for Zn(2+). The active site involves Glu144. 3 residues coordinate Zn(2+): Glu145, Glu169, and His355.

Belongs to the peptidase M20A family. ArgE subfamily. Homodimer. Requires Zn(2+) as cofactor. The cofactor is Co(2+). Glutathione serves as cofactor.

Its subcellular location is the cytoplasm. The enzyme catalyses N(2)-acetyl-L-ornithine + H2O = L-ornithine + acetate. The protein operates within amino-acid biosynthesis; L-arginine biosynthesis; L-ornithine from N(2)-acetyl-L-ornithine (linear): step 1/1. Functionally, catalyzes the hydrolysis of the amide bond of N(2)-acetylated L-amino acids. Cleaves the acetyl group from N-acetyl-L-ornithine to form L-ornithine, an intermediate in L-arginine biosynthesis pathway, and a branchpoint in the synthesis of polyamines. This is Acetylornithine deacetylase from Salmonella heidelberg (strain SL476).